The chain runs to 291 residues: MQENLLEKQFLNHPLYAKIQELKALNLACNFSLDDSVNLSTNSQAKDEILAIAKELKPWRKGPFKIDDLFIDTEWQSFIKFNILKPFMNEISQKCVADIGCNNGYYMFKMLEFNPAKLIGFDPSIKYRLQFELINALAKTPIKYELLGVEDLPSYGLKFDVIFCLGVIYHRSDPIKMLKDLKAGLNKNGVVFLDTMYIEDEREIALVPNKTYSKIPNIYFVPSISALKNWCERAGFKEFEVLATKKTDENEQRKTEWIDSFSLENFLDPKDKNLTIEGYEAPKRVYIRIKI.

Carboxy-S-adenosyl-L-methionine contacts are provided by residues K61, W75, K80, G100, 122–124 (DPS), 149–150 (VE), Y169, and R284.

Belongs to the class I-like SAM-binding methyltransferase superfamily. CmoB family. As to quaternary structure, homotetramer.

The catalysed reaction is carboxy-S-adenosyl-L-methionine + 5-hydroxyuridine(34) in tRNA = 5-carboxymethoxyuridine(34) in tRNA + S-adenosyl-L-homocysteine + H(+). Functionally, catalyzes carboxymethyl transfer from carboxy-S-adenosyl-L-methionine (Cx-SAM) to 5-hydroxyuridine (ho5U) to form 5-carboxymethoxyuridine (cmo5U) at position 34 in tRNAs. This Campylobacter jejuni (strain RM1221) protein is tRNA U34 carboxymethyltransferase.